A 354-amino-acid polypeptide reads, in one-letter code: MTELKNDRYLRALLRQPVDVTPVWMMRQAGRYLPEYKATRAQAGDFMSLCKNAELACEVTLQPLRRYPLDAAILFSDILTIPDAMGLGLYFEAGEGPRFTAPVTCKADVDKLPIPAPEDELGYVMNAVRTIRRELKGEVPLIGFSGSPWTLATYMVEGGSSKAFTVIKKMMYADPQALHLLLDKLAKSVTLYLNAQIKAGAQSVMIFDTWGGVLTGRDYQQFSLYYMHKIVDGLLRENDGRRVPVTLFTKGGGQWLEAMAETGCDALGLDWTTDIADARRRVGHKVALQGNMDPSMLYAPPARIEDEVATILAGFGQGEGHVFNLGHGIHQDVPPEHAGAFVEAVHRLSAQYHN.

Substrate-binding positions include 27-31, aspartate 77, tyrosine 154, threonine 209, and histidine 327; that span reads RQAGR.

The protein belongs to the uroporphyrinogen decarboxylase family. Homodimer.

The protein resides in the cytoplasm. It catalyses the reaction uroporphyrinogen III + 4 H(+) = coproporphyrinogen III + 4 CO2. Its pathway is porphyrin-containing compound metabolism; protoporphyrin-IX biosynthesis; coproporphyrinogen-III from 5-aminolevulinate: step 4/4. Its function is as follows. Catalyzes the decarboxylation of four acetate groups of uroporphyrinogen-III to yield coproporphyrinogen-III. This Salmonella schwarzengrund (strain CVM19633) protein is Uroporphyrinogen decarboxylase.